Here is a 383-residue protein sequence, read N- to C-terminus: MFWTFKEWFWLERFWLPPTIKWSDLEDHDGLVFVKPSHLYVTIPYAFLLLIIRRVFEKFVASPLAKSFGIKETVRKVTPNTVLENFFKHSTRQPLQTDIYGLAKKCNLTERQVERWFRSRRNQERPSRLKKFQEACWRFAFYLMITVAGIAFLYDKPWLYDLWEVWNGYPKQPLLPSQYWYYILEMSFYWSLLFRLGFDVKRKDFLAHIIHHLAAISLMSFSWCANYIRSGTLVMIVHDVADIWLESAKMFSYAGWTQTCNTLFFIFSTIFFISRLIVFPFWILYCTLILPMYHLEPFFSYIFLNLQLMILQVLHLYWGYYILKMLNRCIFMKSIQDVRSDDEDYEEEEEEEEEEATKGKEMDCLKNGLRAERHLIPNGQHGH.

Residues 32–52 traverse the membrane as a helical segment; that stretch reads VFVKPSHLYVTIPYAFLLLII. The homeobox-like stretch occupies residues 66–127; sequence KSFGIKETVR…RSRRNQERPS (62 aa). The region spanning 130–331 is the TLC domain; sequence KKFQEACWRF…ILKMLNRCIF (202 aa). 5 helical membrane-spanning segments follow: residues 139–159, 174–194, 205–225, 264–284, and 298–318; these read FAFY…KPWL, LLPS…SLLF, FLAH…SWCA, FFIF…FWIL, and FFSY…HLYW. The Cytoplasmic portion of the chain corresponds to 319–383; that stretch reads GYYILKMLNR…HLIPNGQHGH (65 aa). Ser-340 is modified (phosphoserine). Acidic residues predominate over residues 342-355; it reads DEDYEEEEEEEEEE. The segment at 342–363 is disordered; it reads DEDYEEEEEEEEEEATKGKEMD.

Expressed in the epidermis, where it localizes at the interface between the stratum granulosum and the stratum corneum (at protein level).

It is found in the endoplasmic reticulum membrane. The enzyme catalyses a very long-chain fatty acyl-CoA + a sphingoid base = an N-(very-long-chain fatty acyl)-sphingoid base + CoA + H(+). The catalysed reaction is docosanoyl-CoA + sphinganine = N-docosanoylsphinganine + CoA + H(+). It carries out the reaction tetracosanoyl-CoA + sphinganine = N-tetracosanoylsphinganine + CoA + H(+). It catalyses the reaction hexacosanoyl-CoA + sphinganine = N-hexacosanoylsphinganine + CoA + H(+). The enzyme catalyses 2-hydroxydocosanoyl-CoA + sphinganine = N-(2-hydroxydocosanoyl)-sphinganine + CoA + H(+). The catalysed reaction is 2-hydroxytetracosanoyl-CoA + sphinganine = N-(2-hydroxytetracosanoyl)-sphinganine + CoA + H(+). It carries out the reaction an ultra-long-chain fatty acyl-CoA + a sphingoid base = an N-(ultra-long-chain-acyl)-sphingoid base + CoA + H(+). It catalyses the reaction octacosanoyl-CoA + sphinganine = N-(octacosanoyl)-sphinganine + CoA + H(+). The enzyme catalyses a fatty acyl-CoA + sphing-4-enine = an N-acylsphing-4-enine + CoA + H(+). The catalysed reaction is sphinganine + octadecanoyl-CoA = N-(octadecanoyl)-sphinganine + CoA + H(+). It carries out the reaction 2-hydroxyoctadecanoyl-CoA + sphinganine = N-(2-hydroxyoctadecanoyl)-sphinganine + CoA + H(+). It participates in lipid metabolism; sphingolipid metabolism. Ceramide synthase that catalyzes the transfer of the acyl chain from acyl-CoA to a sphingoid base, with high selectivity toward very- and ultra-long-chain fatty acyl-CoA (chain length greater than C22). N-acylates sphinganine and sphingosine bases to form dihydroceramides and ceramides in de novo synthesis and salvage pathways, respectively. It is crucial for the synthesis of ultra-long-chain ceramides in the epidermis, to maintain epidermal lipid homeostasis and terminal differentiation. The polypeptide is Ceramide synthase 3 (Homo sapiens (Human)).